The primary structure comprises 81 residues: Small ribosomal subunit protein bS16 (81 aa).

Belongs to the bacterial ribosomal protein bS16 family.

This Nautilia profundicola (strain ATCC BAA-1463 / DSM 18972 / AmH) protein is Small ribosomal subunit protein bS16.